Consider the following 192-residue polypeptide: Ion-translocating oxidoreductase complex subunit A (192 aa).

Helical transmembrane passes span 5–25 (LLLL…FLGL), 39–59 (IGMS…SYLV), 72–92 (LRTM…EMLV), 102–122 (ALGI…VALL), 134–154 (AIYG…FSAM), and 171–191 (AIAM…TGLV).

The protein belongs to the NqrDE/RnfAE family. As to quaternary structure, the complex is composed of six subunits: RnfA, RnfB, RnfC, RnfD, RnfE and RnfG.

The protein localises to the cell inner membrane. Functionally, part of a membrane-bound complex that couples electron transfer with translocation of ions across the membrane. This is Ion-translocating oxidoreductase complex subunit A from Shewanella loihica (strain ATCC BAA-1088 / PV-4).